The sequence spans 852 residues: Translation initiation factor IF-2 (852 aa).

The tract at residues 1–240 (MEDKNKTIKE…KTSSDKRDFS (240 aa)) is disordered. The segment covering 78–90 (KEVKYEESSRKQD) has biased composition (basic and acidic residues). The span at 106 to 120 (VRPSGDSSYPVSRSP) shows a compositional bias: polar residues. Residues 150 to 200 (RGPGQGGGYQGNRGPGQGGGYQGNRGPGQQTGPGNRFGGSGPGNRSGGPGG) are compositionally biased toward gly residues. The span at 227–240 (HDKEKTSSDKRDFS) shows a compositional bias: basic and acidic residues. A tr-type G domain is found at 347–516 (NRPPVVTIMG…LLQAEVMDLK (170 aa)). The segment at 356–363 (GHVDHGKT) is G1. GTP is bound at residue 356–363 (GHVDHGKT). A G2 region spans residues 381-385 (GITQH). A G3 region spans residues 402-405 (DTPG). Residues 402–406 (DTPGH) and 456–459 (NKID) each bind GTP. Positions 456 to 459 (NKID) are G4. Residues 492-494 (SAR) are G5.

It belongs to the TRAFAC class translation factor GTPase superfamily. Classic translation factor GTPase family. IF-2 subfamily.

It is found in the cytoplasm. In terms of biological role, one of the essential components for the initiation of protein synthesis. Protects formylmethionyl-tRNA from spontaneous hydrolysis and promotes its binding to the 30S ribosomal subunits. Also involved in the hydrolysis of GTP during the formation of the 70S ribosomal complex. The polypeptide is Translation initiation factor IF-2 (Leptospira borgpetersenii serovar Hardjo-bovis (strain JB197)).